A 2289-amino-acid chain; its full sequence is DNA polymerase II large subunit (2289 aa).

Disordered regions lie at residues 279-330 (IGSD…SPRA) and 544-563 (SDTN…NTDD). Positions 292–304 (GEADIVKTDKDTN) are enriched in basic and acidic residues. The segment covering 305-318 (ESETEDGIDNDDYN) has biased composition (acidic residues). Positions 544–557 (SDTNSASGNTSLRA) are enriched in polar residues. DOD-type homing endonuclease domains follow at residues 1222–1367 (LLGY…RLGI) and 1755–1911 (LLGQ…RLGV).

It belongs to the archaeal DNA polymerase II family. In terms of assembly, heterodimer of a large subunit and a small subunit. In terms of processing, this protein undergoes a protein self splicing that involves a post-translational excision of the intervening region (intein) followed by peptide ligation.

The catalysed reaction is DNA(n) + a 2'-deoxyribonucleoside 5'-triphosphate = DNA(n+1) + diphosphate. The enzyme catalyses Exonucleolytic cleavage in the 3'- to 5'-direction to yield nucleoside 5'-phosphates.. Its function is as follows. Possesses two activities: a DNA synthesis (polymerase) and an exonucleolytic activity that degrades single-stranded DNA in the 3'- to 5'-direction. Has a template-primer preference which is characteristic of a replicative DNA polymerase. This chain is DNA polymerase II large subunit, found in Haloquadratum walsbyi (strain DSM 16790 / HBSQ001).